A 413-amino-acid polypeptide reads, in one-letter code: MGYYNNVFDECNDQTDIGRVIRDGREVILQAYNWESHKYDWWRNLDGKVPDIAKSGFTSAWLPPPSQSLAPEGYLPQDLYSLNSAYGSEHLLKSLLRKMKQYKVRAMADIVINHRVGTTRGHGGMYNRYDGISLPWDEHAVTSCTGGLGNRSTGDNFNGVPNVDHTQHFVRKDIIGWLRWLRNTVGFQDFRFDFARGYSANYVKEYIGAAKPLFSVGECWDSCNYNGHGLDYNQDSHRQRIISWIDATGQISAAFDFTTKGILQEAVKGQYWRLCDAQGKPPGVMGWWPSRAVTFLDNHDTGSTQAHWPFPSHHVMEGYAYILTHPGIPCVFYDHFYDWGSSIHDQIVKLIDIRRRQDIHSRSTVRVLKAESNLYAAIVGEKICMKLGDGSWCPSGRDWTLATSGHRYAVWHK.

Substrate-binding positions include 74–75 and 191–196; these read YL and RFDFAR. Asp-193 functions as the Nucleophile in the catalytic mechanism. The Proton donor role is filled by Glu-218. Residues Trp-220, Ser-222, Gln-239, Asp-246, Lys-280, 286–288, His-299, Gln-305, Lys-386, and Trp-411 contribute to the substrate site; that span reads GWW.

This sequence belongs to the glycosyl hydrolase 13 family. Ca(2+) is required as a cofactor. Expressed in developing siliques.

It localises to the cytoplasm. It is found in the cytosol. It catalyses the reaction Endohydrolysis of (1-&gt;4)-alpha-D-glucosidic linkages in polysaccharides containing three or more (1-&gt;4)-alpha-linked D-glucose units.. Functionally, probable alpha-amylase that does not seem to be required for breakdown of transitory starch in leaves. In Arabidopsis thaliana (Mouse-ear cress), this protein is Probable alpha-amylase 2 (AMY2).